The following is a 211-amino-acid chain: Riboflavin kinase (211 aa).

Residues 1–81 (MKCIDRRLIG…DLLRYFNILS (81 aa)) form an H-T-H motif-like region. Residues 82–211 (IRLSGRVVSG…DRVEIEIYLE (130 aa)) are riboflavin kinase. 91–96 (GLGEGA) lines the CDP pocket. The Mg(2+) site is built by Thr120 and Asn122. FMN is bound by residues Thr177 and Glu185. A CDP-binding site is contributed by 190 to 193 (FKLR).

Belongs to the archaeal riboflavin kinase family. Requires Mg(2+) as cofactor.

It carries out the reaction riboflavin + CTP = CDP + FMN + H(+). It functions in the pathway cofactor biosynthesis; FMN biosynthesis; FMN from riboflavin (CTP route): step 1/1. Catalyzes the CTP-dependent phosphorylation of riboflavin (vitamin B2) to form flavin mononucleotide (FMN). In Pyrobaculum islandicum (strain DSM 4184 / JCM 9189 / GEO3), this protein is Riboflavin kinase (ribK).